A 558-amino-acid polypeptide reads, in one-letter code: Dihydroxy-acid dehydratase (558 aa).

Cys-48 is a binding site for [2Fe-2S] cluster. Asp-80 is a Mg(2+) binding site. Cys-121 is a binding site for [2Fe-2S] cluster. Residues Asp-122 and Lys-123 each contribute to the Mg(2+) site. Position 123 is an N6-carboxylysine (Lys-123). Cys-193 serves as a coordination point for [2Fe-2S] cluster. Glu-445 contacts Mg(2+). Ser-471 serves as the catalytic Proton acceptor.

It belongs to the IlvD/Edd family. In terms of assembly, homodimer. It depends on [2Fe-2S] cluster as a cofactor. Mg(2+) is required as a cofactor.

The enzyme catalyses (2R)-2,3-dihydroxy-3-methylbutanoate = 3-methyl-2-oxobutanoate + H2O. It catalyses the reaction (2R,3R)-2,3-dihydroxy-3-methylpentanoate = (S)-3-methyl-2-oxopentanoate + H2O. Its pathway is amino-acid biosynthesis; L-isoleucine biosynthesis; L-isoleucine from 2-oxobutanoate: step 3/4. It functions in the pathway amino-acid biosynthesis; L-valine biosynthesis; L-valine from pyruvate: step 3/4. In terms of biological role, functions in the biosynthesis of branched-chain amino acids. Catalyzes the dehydration of (2R,3R)-2,3-dihydroxy-3-methylpentanoate (2,3-dihydroxy-3-methylvalerate) into 2-oxo-3-methylpentanoate (2-oxo-3-methylvalerate) and of (2R)-2,3-dihydroxy-3-methylbutanoate (2,3-dihydroxyisovalerate) into 2-oxo-3-methylbutanoate (2-oxoisovalerate), the penultimate precursor to L-isoleucine and L-valine, respectively. The sequence is that of Dihydroxy-acid dehydratase from Prochlorococcus marinus (strain SARG / CCMP1375 / SS120).